A 293-amino-acid chain; its full sequence is Transcription elongation factor S-II (293 aa).

Residues 4 to 81 (ADIRSAKAAL…KKWKADVSKG (78 aa)) enclose the TFIIS N-terminal domain. Residues 81 to 123 (GRPLKTTTTTSSTPSKHADVGSQAQKQVQKQSSSGQRTFKSDN) are disordered. Low complexity predominate over residues 100 to 116 (VGSQAQKQVQKQSSSGQ). The TFIIS central domain maps to 133-248 (IRNNCIGLMY…HAQGAKPQKA (116 aa)). Residues 251 to 291 (DLFTCGKCKQKKVSYYQMQTRSADEPMTTFCECTVCGNRWK) form a TFIIS-type zinc finger. Positions 255, 258, 283, and 286 each coordinate Zn(2+).

Belongs to the TFS-II family.

The protein localises to the nucleus. Its function is as follows. Necessary for efficient RNA polymerase II transcription elongation past template-encoded arresting sites. The arresting sites in DNA have the property of trapping a certain fraction of elongating RNA polymerases that pass through, resulting in locked ternary complexes. Cleavage of the nascent transcript by S-II allows the resumption of elongation from the new 3'-terminus. The sequence is that of Transcription elongation factor S-II (tfs1) from Schizosaccharomyces pombe (strain 972 / ATCC 24843) (Fission yeast).